The sequence spans 404 residues: Glucose-1-phosphate adenylyltransferase 2 (404 aa).

Alpha-D-glucose 1-phosphate-binding positions include Tyr97, Gly162, 177–178 (EK), and Ser195.

Belongs to the bacterial/plant glucose-1-phosphate adenylyltransferase family. In terms of assembly, homotetramer.

It catalyses the reaction alpha-D-glucose 1-phosphate + ATP + H(+) = ADP-alpha-D-glucose + diphosphate. It functions in the pathway glycan biosynthesis; glycogen biosynthesis. Its function is as follows. Involved in the biosynthesis of ADP-glucose, a building block required for the elongation reactions to produce glycogen. Catalyzes the reaction between ATP and alpha-D-glucose 1-phosphate (G1P) to produce pyrophosphate and ADP-Glc. The polypeptide is Glucose-1-phosphate adenylyltransferase 2 (Vibrio parahaemolyticus serotype O3:K6 (strain RIMD 2210633)).